Consider the following 179-residue polypeptide: NADH-quinone oxidoreductase subunit B 1 (179 aa).

Positions 38, 39, 104, and 133 each coordinate [4Fe-4S] cluster.

Belongs to the complex I 20 kDa subunit family. As to quaternary structure, NDH-1 is composed of 14 different subunits. Subunits NuoB, C, D, E, F, and G constitute the peripheral sector of the complex. Requires [4Fe-4S] cluster as cofactor.

The protein resides in the cell membrane. It catalyses the reaction a quinone + NADH + 5 H(+)(in) = a quinol + NAD(+) + 4 H(+)(out). NDH-1 shuttles electrons from NADH, via FMN and iron-sulfur (Fe-S) centers, to quinones in the respiratory chain. The immediate electron acceptor for the enzyme in this species is believed to be ubiquinone. Couples the redox reaction to proton translocation (for every two electrons transferred, four hydrogen ions are translocated across the cytoplasmic membrane), and thus conserves the redox energy in a proton gradient. The chain is NADH-quinone oxidoreductase subunit B 1 from Herpetosiphon aurantiacus (strain ATCC 23779 / DSM 785 / 114-95).